We begin with the raw amino-acid sequence, 284 residues long: Bifunctional protein FolD (284 aa).

NADP(+) contacts are provided by residues 164-166 (GTS) and I230.

This sequence belongs to the tetrahydrofolate dehydrogenase/cyclohydrolase family. Homodimer.

It catalyses the reaction (6R)-5,10-methylene-5,6,7,8-tetrahydrofolate + NADP(+) = (6R)-5,10-methenyltetrahydrofolate + NADPH. The enzyme catalyses (6R)-5,10-methenyltetrahydrofolate + H2O = (6R)-10-formyltetrahydrofolate + H(+). Its pathway is one-carbon metabolism; tetrahydrofolate interconversion. Functionally, catalyzes the oxidation of 5,10-methylenetetrahydrofolate to 5,10-methenyltetrahydrofolate and then the hydrolysis of 5,10-methenyltetrahydrofolate to 10-formyltetrahydrofolate. This Mycoplasma capricolum subsp. capricolum (strain California kid / ATCC 27343 / NCTC 10154) protein is Bifunctional protein FolD.